Here is a 578-residue protein sequence, read N- to C-terminus: Thiol:disulfide interchange protein DsbD (578 aa).

An N-terminal signal peptide occupies residues 1 to 24 (MAQRFITLILLLCSILLAPHSAQA). 2 disulfide bridges follow: cysteine 134–cysteine 140 and cysteine 195–cysteine 317. Helical transmembrane passes span 183–203 (ALLI…YPLI), 219–239 (ILLL…LLGL), 256–276 (YVLI…FGLY), 297–317 (GGSL…CSPC), 318–338 (TTAP…MLAG), 339–359 (GGTL…VTLF), 370–390 (WMQY…VFLL), 397–417 (VWGL…AFIL), and 421–441 (AHSG…LIAA). In terms of domain architecture, Thioredoxin spans 438–578 (LIAARPLQDW…FLQHLQNLPR (141 aa)). Cysteine 493 and cysteine 496 form a disulfide bridge.

It belongs to the thioredoxin family. DsbD subfamily.

It localises to the cell inner membrane. The enzyme catalyses [protein]-dithiol + NAD(+) = [protein]-disulfide + NADH + H(+). It carries out the reaction [protein]-dithiol + NADP(+) = [protein]-disulfide + NADPH + H(+). Functionally, required to facilitate the formation of correct disulfide bonds in some periplasmic proteins and for the assembly of the periplasmic c-type cytochromes. Acts by transferring electrons from cytoplasmic thioredoxin to the periplasm. This transfer involves a cascade of disulfide bond formation and reduction steps. This Yersinia enterocolitica serotype O:8 / biotype 1B (strain NCTC 13174 / 8081) protein is Thiol:disulfide interchange protein DsbD.